We begin with the raw amino-acid sequence, 205 residues long: Molybdenum cofactor guanylyltransferase (205 aa).

GTP-binding positions include L14–G16, K27, D77, and D107. Residue D107 coordinates Mg(2+).

It belongs to the MobA family. As to quaternary structure, monomer. Mg(2+) is required as a cofactor.

Its subcellular location is the cytoplasm. It catalyses the reaction Mo-molybdopterin + GTP + H(+) = Mo-molybdopterin guanine dinucleotide + diphosphate. In terms of biological role, transfers a GMP moiety from GTP to Mo-molybdopterin (Mo-MPT) cofactor (Moco or molybdenum cofactor) to form Mo-molybdopterin guanine dinucleotide (Mo-MGD) cofactor. This is Molybdenum cofactor guanylyltransferase from Burkholderia cenocepacia (strain HI2424).